The following is a 91-amino-acid chain: MVMMKLFTSPTCPYCPKAEKVVSKVAKEEGVLAINLPVNTDEGLKEALKFGIRGVPALVINDKYLILGVPDEGELRQLIRKLKGGEEYGAS.

One can recognise a Glutaredoxin domain in the interval 1–91 (MVMMKLFTSP…LKGGEEYGAS (91 aa)). A disulfide bond links cysteine 12 and cysteine 15.

This sequence belongs to the glutaredoxin family.

It localises to the cytoplasm. In terms of biological role, acts to maintain redox homeostasis; functions as a protein disulfide reductase. In Archaeoglobus fulgidus (strain ATCC 49558 / DSM 4304 / JCM 9628 / NBRC 100126 / VC-16), this protein is Probable Thioredoxin.